We begin with the raw amino-acid sequence, 237 residues long: UDP-2,3-diacylglucosamine hydrolase (237 aa).

Mn(2+)-binding residues include aspartate 9, histidine 11, aspartate 42, asparagine 80, and histidine 115. 80 to 81 (NR) is a binding site for substrate. Substrate contacts are provided by aspartate 123, serine 161, lysine 165, lysine 168, and histidine 196. Mn(2+)-binding residues include histidine 196 and histidine 198.

Belongs to the LpxH family. Mn(2+) serves as cofactor.

The protein resides in the cell inner membrane. It carries out the reaction UDP-2-N,3-O-bis[(3R)-3-hydroxytetradecanoyl]-alpha-D-glucosamine + H2O = 2-N,3-O-bis[(3R)-3-hydroxytetradecanoyl]-alpha-D-glucosaminyl 1-phosphate + UMP + 2 H(+). The protein operates within glycolipid biosynthesis; lipid IV(A) biosynthesis; lipid IV(A) from (3R)-3-hydroxytetradecanoyl-[acyl-carrier-protein] and UDP-N-acetyl-alpha-D-glucosamine: step 4/6. Functionally, hydrolyzes the pyrophosphate bond of UDP-2,3-diacylglucosamine to yield 2,3-diacylglucosamine 1-phosphate (lipid X) and UMP by catalyzing the attack of water at the alpha-P atom. Involved in the biosynthesis of lipid A, a phosphorylated glycolipid that anchors the lipopolysaccharide to the outer membrane of the cell. This is UDP-2,3-diacylglucosamine hydrolase from Haemophilus influenzae (strain PittGG).